The chain runs to 477 residues: POC1 centriolar protein homolog B (477 aa).

WD repeat units lie at residues 16–55, 58–97, 100–139, 142–181, 183–223, 226–265, and 268–307; these read GHKA…RAYR, GHKD…KSSE, AHTA…FLYS, RHTH…CVNN, SDSV…LLQH, VHSC…LIYT, and GHTG…VHYR. Residues 449–469 adopt a coiled-coil conformation; that stretch reads EQRLSLTEDKLKDCLENQQKL.

This sequence belongs to the WD repeat POC1 family. Interacts with POC1A. Interacts with FAM161A. Interacts with CEP44; the interaction is direct and recruits POC1B to centriolar microtubules. Forms a microtubule-associated complex with POC5, CETN2 and FAM161A. Interacts with CCDC15. In terms of processing, phosphorylated in mitotic cells that may be mediated by CDK1.

It is found in the cytoplasm. It localises to the cytoskeleton. Its subcellular location is the microtubule organizing center. The protein localises to the centrosome. The protein resides in the centriole. It is found in the cilium basal body. It localises to the spindle pole. Plays an important role in centriole assembly and/or stability and ciliogenesis. Involved in early steps of centriole duplication, as well as in the later steps of centriole length control. Acts in concert with POC1A to ensure centriole integrity and proper mitotic spindle formation. Required for primary cilia formation, ciliary length and also cell proliferation. Required for retinal integrity. Acts as a positive regulator of centriole elongation. The polypeptide is POC1 centriolar protein homolog B (Poc1b) (Rattus norvegicus (Rat)).